A 396-amino-acid chain; its full sequence is Tryptophan synthase beta chain (396 aa).

At K88 the chain carries N6-(pyridoxal phosphate)lysine.

The protein belongs to the TrpB family. As to quaternary structure, tetramer of two alpha and two beta chains. Pyridoxal 5'-phosphate is required as a cofactor.

It catalyses the reaction (1S,2R)-1-C-(indol-3-yl)glycerol 3-phosphate + L-serine = D-glyceraldehyde 3-phosphate + L-tryptophan + H2O. It participates in amino-acid biosynthesis; L-tryptophan biosynthesis; L-tryptophan from chorismate: step 5/5. Functionally, the beta subunit is responsible for the synthesis of L-tryptophan from indole and L-serine. The chain is Tryptophan synthase beta chain from Shewanella oneidensis (strain ATCC 700550 / JCM 31522 / CIP 106686 / LMG 19005 / NCIMB 14063 / MR-1).